Reading from the N-terminus, the 311-residue chain is MNNISIKCLKSEKIQSGACHGQFLINSLNPGQGITIGNQLRRVLLGDLGGVAISAVRIAGITHEFSTIPGVREDILEILLNLKGIICTSQIQDTQFGHLKVQGPSVVTADLIQLPPGVEIINPNHYIATISTSNILEIEFKFEYGSGYHLASQNFVEEDENYLQLDTIFMPVQKVDFKIENIYDATNNISERLFLDIWTNGSISPNDALESAAQVIIDLFTLLINNKNINNNNRLELKPETISIEPYTNIAIEELQLSVRAYNCLKKAQINTVGDLLQYSPEKLQELKNFGRKSADEVFSTLKNKLGIILK.

The segment at 1–227 (MNNISIKCLK…DLFTLLINNK (227 aa)) is alpha N-terminal domain (alpha-NTD). The interval 242–311 (ISIEPYTNIA…LKNKLGIILK (70 aa)) is alpha C-terminal domain (alpha-CTD).

The protein belongs to the RNA polymerase alpha chain family. As to quaternary structure, in plastids the minimal PEP RNA polymerase catalytic core is composed of four subunits: alpha, beta, beta', and beta''. When a (nuclear-encoded) sigma factor is associated with the core the holoenzyme is formed, which can initiate transcription.

The protein resides in the plastid. It is found in the chloroplast. It catalyses the reaction RNA(n) + a ribonucleoside 5'-triphosphate = RNA(n+1) + diphosphate. DNA-dependent RNA polymerase catalyzes the transcription of DNA into RNA using the four ribonucleoside triphosphates as substrates. The polypeptide is DNA-directed RNA polymerase subunit alpha (Phaeodactylum tricornutum (strain CCAP 1055/1)).